Here is a 147-residue protein sequence, read N- to C-terminus: MKVILKVDVKGQGKAGEVKNVADAYAKNVLFKKNLAVEATPGNLKAFAAKERRAEEAAEEELNEAKRLKEKLEKETIAVTTKAGEGGRVFGSVTSKQIADALKSMGYKIDKRKIELEHPIKALGFTKVPVKLHHDVVATLNVHVQEA.

This sequence belongs to the bacterial ribosomal protein bL9 family.

Functionally, binds to the 23S rRNA. This is Large ribosomal subunit protein bL9 from Exiguobacterium sp. (strain ATCC BAA-1283 / AT1b).